The chain runs to 199 residues: Nitrile hydratase subunit alpha (199 aa).

Positions 102, 105, 106, and 107 each coordinate Fe(3+). Residue cysteine 105 is modified to Cysteine sulfinic acid (-SO2H). Residue cysteine 107 is modified to Cysteine sulfenic acid (-SOH).

Belongs to the nitrile hydratase subunit alpha family. As to quaternary structure, heterodimer of an alpha and a beta chain. The cofactor is Fe(3+). Post-translationally, oxidation on Cys-105 is essential for the activity. Oxidation on Cys-107 stabilizes the Fe-NO ligand coordinated in the inactive form.

It carries out the reaction an aliphatic primary amide = an aliphatic nitrile + H2O. With respect to regulation, inactivated by oxidation of Cys-107 to a sulfenic acid. Functionally, NHase catalyzes the hydration of various nitrile compounds to the corresponding amides. Industrial production of acrylamide is now being developed using some of the enzymes of this class. In Rhodococcus sp, this protein is Nitrile hydratase subunit alpha (nthA).